Consider the following 140-residue polypeptide: ATP synthase epsilon chain (140 aa).

This sequence belongs to the ATPase epsilon chain family. As to quaternary structure, F-type ATPases have 2 components, CF(1) - the catalytic core - and CF(0) - the membrane proton channel. CF(1) has five subunits: alpha(3), beta(3), gamma(1), delta(1), epsilon(1). CF(0) has three main subunits: a, b and c.

The protein localises to the cell inner membrane. Produces ATP from ADP in the presence of a proton gradient across the membrane. In Vibrio vulnificus (strain CMCP6), this protein is ATP synthase epsilon chain.